The primary structure comprises 164 residues: Class I hydrophobin rodA (164 aa).

A signal peptide spans 1 to 18 (MQFSISALVLGLAATVYA). Asn-50 is a glycosylation site (N-linked (GlcNAc...) asparagine). Disulfide bonds link Cys-60–Cys-138, Cys-68–Cys-132, Cys-69–Cys-109, and Cys-139–Cys-157.

This sequence belongs to the fungal hydrophobin family. Self-assembles to form functional amyloid fibrils called rodlets. Self-assembly into fibrillar rodlets occurs spontaneously at hydrophobic:hydrophilic interfaces and the rodlets further associate laterally to form amphipathic monolayers.

The protein localises to the secreted. Its subcellular location is the cell wall. In terms of biological role, aerial growth, conidiation, and dispersal of filamentous fungi in the environment rely upon a capability of their secreting small amphipathic proteins called hydrophobins (HPBs) with low sequence identity. Class I can self-assemble into an outermost layer of rodlet bundles on aerial cell surfaces, conferring cellular hydrophobicity that supports fungal growth, development and dispersal; whereas Class II form highly ordered films at water-air interfaces through intermolecular interactions but contribute nothing to the rodlet structure. RodA is a class I hydrophobin involved in the cell surface hydrophobicity. The surface rodlet layer of the conidial cell wall makes airborne conidia of filamentous fungi inert to both innate and adaptive immunity. This is Class I hydrophobin rodA from Penicillium camemberti (strain FM 013).